Reading from the N-terminus, the 285-residue chain is Bifunctional protein FolD (285 aa).

NADP(+) is bound by residues 165–167 and Ser-190; that span reads GRS.

This sequence belongs to the tetrahydrofolate dehydrogenase/cyclohydrolase family. As to quaternary structure, homodimer.

The catalysed reaction is (6R)-5,10-methylene-5,6,7,8-tetrahydrofolate + NADP(+) = (6R)-5,10-methenyltetrahydrofolate + NADPH. The enzyme catalyses (6R)-5,10-methenyltetrahydrofolate + H2O = (6R)-10-formyltetrahydrofolate + H(+). Its pathway is one-carbon metabolism; tetrahydrofolate interconversion. Its function is as follows. Catalyzes the oxidation of 5,10-methylenetetrahydrofolate to 5,10-methenyltetrahydrofolate and then the hydrolysis of 5,10-methenyltetrahydrofolate to 10-formyltetrahydrofolate. This Streptococcus pneumoniae serotype 4 (strain ATCC BAA-334 / TIGR4) protein is Bifunctional protein FolD.